Reading from the N-terminus, the 500-residue chain is MSMPIPSRQLFIDGEWREPIKKNRIPIINPSNEEIIGDIPAGSSEDIEVAVAAARRALKRNKGREWAATSGAHRARYLRAIAAKVTERKDHFVKLETIDSGKPFDEAVLDIDDVATCFEYFAGQAEAMDAKQKAPVTLPMERFKSHVLRQPIGVVGLITPWNYPLLMATWKIAPALAAGCTAVLKPSELASITCLEFGEVCNEVGLPPGVLNIVTGLGPDAGAPLAAHPDVDKVAFTGSSATGSKVMASAAQLVKPVTLELGGKSPIIVFEDVDIDQVVEWTMFGCFWTNGQICSATSRLLVHESIAAEFIDRLVKWTKNIKISDPFEEGCRLGPVISKGQYDKIMKFISTAKSEGATILCGGSRPEHLKKGYFIEPTIISDISTSMQIWREEVFGPVLCVKTFSSEDEALELANDTEYGLASAVFSKDLERCERVSKLLESGAVWVNCSQPCFVHAPWGGIKRSGFGRELGEWGIENYLNIKQVTSDISNEPWGWYKSP.

Residues 1–7 constitute a chloroplast transit peptide; it reads MSMPIPS. 238–243 is a binding site for NAD(+); that stretch reads GSSATG. The Proton acceptor role is filled by glutamate 260. The active-site Nucleophile is cysteine 294.

This sequence belongs to the aldehyde dehydrogenase family. In terms of assembly, homodimer.

The protein localises to the plastid. Its subcellular location is the chloroplast. The catalysed reaction is betaine aldehyde + NAD(+) + H2O = glycine betaine + NADH + 2 H(+). It participates in amine and polyamine biosynthesis; betaine biosynthesis via choline pathway; betaine from betaine aldehyde: step 1/1. The polypeptide is Betaine aldehyde dehydrogenase, chloroplastic (Beta vulgaris (Sugar beet)).